The following is an 882-amino-acid chain: Valine--tRNA ligase (882 aa).

A 'HIGH' region motif is present at residues 52-62; sequence PNVTGSLHMGH. The short motif at 539–543 is the 'KMSKS' region element; the sequence is KMSKS. An ATP-binding site is contributed by Lys-542. A coiled-coil region spans residues 816-882; that stretch reads IDVAAERRRL…RINARLAVLQ (67 aa).

Belongs to the class-I aminoacyl-tRNA synthetase family. ValS type 1 subfamily. As to quaternary structure, monomer.

It localises to the cytoplasm. The enzyme catalyses tRNA(Val) + L-valine + ATP = L-valyl-tRNA(Val) + AMP + diphosphate. Its function is as follows. Catalyzes the attachment of valine to tRNA(Val). As ValRS can inadvertently accommodate and process structurally similar amino acids such as threonine, to avoid such errors, it has a 'posttransfer' editing activity that hydrolyzes mischarged Thr-tRNA(Val) in a tRNA-dependent manner. This Mycolicibacterium paratuberculosis (strain ATCC BAA-968 / K-10) (Mycobacterium paratuberculosis) protein is Valine--tRNA ligase.